We begin with the raw amino-acid sequence, 492 residues long: N-succinylglutamate 5-semialdehyde dehydrogenase (492 aa).

NAD(+) is bound at residue 220–225; sequence GSANTG. Residues E243 and C277 contribute to the active site.

It belongs to the aldehyde dehydrogenase family. AstD subfamily.

It catalyses the reaction N-succinyl-L-glutamate 5-semialdehyde + NAD(+) + H2O = N-succinyl-L-glutamate + NADH + 2 H(+). It functions in the pathway amino-acid degradation; L-arginine degradation via AST pathway; L-glutamate and succinate from L-arginine: step 4/5. Its function is as follows. Catalyzes the NAD-dependent reduction of succinylglutamate semialdehyde into succinylglutamate. This chain is N-succinylglutamate 5-semialdehyde dehydrogenase, found in Escherichia coli (strain ATCC 8739 / DSM 1576 / NBRC 3972 / NCIMB 8545 / WDCM 00012 / Crooks).